Here is a 506-residue protein sequence, read N- to C-terminus: Protein nucleotidyltransferase YdiU (506 aa).

ATP is bound by residues Gly-95, Gly-97, Arg-98, Lys-118, Asp-130, Gly-131, Arg-181, and Arg-188. Asp-257 functions as the Proton acceptor in the catalytic mechanism. Residues Asn-258 and Asp-267 each contribute to the Mg(2+) site. An ATP-binding site is contributed by Asp-267. A disordered region spans residues 487-506 (KHYQDAPTPDQRVKQTFCGT).

This sequence belongs to the SELO family. It depends on Mg(2+) as a cofactor. Mn(2+) is required as a cofactor.

It catalyses the reaction L-seryl-[protein] + ATP = 3-O-(5'-adenylyl)-L-seryl-[protein] + diphosphate. The enzyme catalyses L-threonyl-[protein] + ATP = 3-O-(5'-adenylyl)-L-threonyl-[protein] + diphosphate. The catalysed reaction is L-tyrosyl-[protein] + ATP = O-(5'-adenylyl)-L-tyrosyl-[protein] + diphosphate. It carries out the reaction L-histidyl-[protein] + UTP = N(tele)-(5'-uridylyl)-L-histidyl-[protein] + diphosphate. It catalyses the reaction L-seryl-[protein] + UTP = O-(5'-uridylyl)-L-seryl-[protein] + diphosphate. The enzyme catalyses L-tyrosyl-[protein] + UTP = O-(5'-uridylyl)-L-tyrosyl-[protein] + diphosphate. Nucleotidyltransferase involved in the post-translational modification of proteins. It can catalyze the addition of adenosine monophosphate (AMP) or uridine monophosphate (UMP) to a protein, resulting in modifications known as AMPylation and UMPylation. The chain is Protein nucleotidyltransferase YdiU from Shewanella denitrificans (strain OS217 / ATCC BAA-1090 / DSM 15013).